The sequence spans 226 residues: 2,3-bisphosphoglycerate-dependent phosphoglycerate mutase (226 aa).

Residues 8-15, 21-22, Arg58, 109-112, Lys120, 136-137, and 180-181 contribute to the substrate site; these read RHGQSVWN, TG, ERMY, RR, and GN. The Tele-phosphohistidine intermediate role is filled by His9. The active-site Proton donor/acceptor is the Glu109.

The protein belongs to the phosphoglycerate mutase family. BPG-dependent PGAM subfamily.

The enzyme catalyses (2R)-2-phosphoglycerate = (2R)-3-phosphoglycerate. It functions in the pathway carbohydrate degradation; glycolysis; pyruvate from D-glyceraldehyde 3-phosphate: step 3/5. Catalyzes the interconversion of 2-phosphoglycerate and 3-phosphoglycerate. This Chlamydia trachomatis serovar A (strain ATCC VR-571B / DSM 19440 / HAR-13) protein is 2,3-bisphosphoglycerate-dependent phosphoglycerate mutase.